Reading from the N-terminus, the 643-residue chain is uncharacterized protein (643 aa).

The chain crosses the membrane as a helical span at residues 9-29 (IVLALLLLLLPVVCGDVSVYK).

It is found in the membrane. This is an uncharacterized protein from Methanocaldococcus jannaschii (strain ATCC 43067 / DSM 2661 / JAL-1 / JCM 10045 / NBRC 100440) (Methanococcus jannaschii).